Reading from the N-terminus, the 854-residue chain is Alkaline phosphatase-like protein PglZ (854 aa).

Belongs to the alkaline phosphatase superfamily.

In terms of biological role, BREX systems (bacteriophage exclusion) provide immunity against bacteriophage. A core protein of a type 1 BREX system. This system allows phage adsorption but prevents phage DNA replication, without degradation of the phage DNA. Methylation of bacterial DNA by PglX probably guides self/non-self discrimination. When the brxA-brxB-brxC-pglX and pglZ-brxL operons are transformed into a susceptible B.subtilis strain (BEST7003) they confer resistance to bacteriophages SPbeta, SP16, Zeta, phi3T and SP02 and partial protection to phages SP01 and SP82G (these include lytic and temperate phage). They do not protect against phages phi105, rho10 or rho14. Additionally confers a very slight reduction in efficiency of plasmid transformation. The chain is Alkaline phosphatase-like protein PglZ from Bacillus cereus (strain H3081.97).